A 952-amino-acid chain; its full sequence is Histone deacetylase 7 (952 aa).

Transcription repression regions lie at residues 1-268 (MDLR…DSDR) and 218-546 (GPNP…EHAG). The tract at residues 49–149 (SMDTPMPELQ…LPSDPPEHFP (101 aa)) is interaction with MEF2A. Residue Ser-109 is modified to Phosphoserine. 2 disordered regions span residues 130–224 (LSSF…PILG) and 261–283 (PARADSDRRTHPTLGPRGPILGS). At Ser-155 the chain carries Phosphoserine; by MARK2, MARK3 and PKD/PRKD1. Residues 167–181 (KSLERRKNPLLRKES) show a composition bias toward basic and acidic residues. The residue at position 181 (Ser-181) is a Phosphoserine; by PKD/PRKD2. Residues 197 to 212 (SSPSSSSTPASGCSSP) are compositionally biased toward low complexity. The residue at position 283 (Ser-283) is a Phosphoserine. Thr-286 carries the phosphothreonine modification. 3 disordered regions span residues 349–377 (LHWPLSRTRSEPLPPSATAPPPPGPMQPR), 389–441 (KRSA…GPAP), and 460–510 (LPRG…SSSE). At Ser-358 the chain carries Phosphoserine; by PKD/PRKD1. Positions 360–374 (PLPPSATAPPPPGPM) are enriched in pro residues. A phosphoserine mark is found at Ser-364, Ser-405, Ser-486, Ser-487, and Ser-507. The segment covering 482-503 (SRAQSSPAAPASLSAPEPASQA) has biased composition (low complexity). The histone deacetylase stretch occupies residues 512–865 (PARTLPFTTG…VAALLGNRVD (354 aa)). Cys-533, Cys-535, and His-541 together coordinate Zn(2+). Ser-595 bears the Phosphoserine mark. A Zn(2+)-binding site is contributed by Cys-618. The active site involves His-670. The interval 877-952 (NLNAIRSLEA…LVEEEEPMNL (76 aa)) is interaction with SIN3A. The Nuclear export signal signature appears at 917-952 (KEEVEAVTALASLSVGILAEDRPSEQLVEEEEPMNL).

Belongs to the histone deacetylase family. HD type 2 subfamily. As to quaternary structure, interacts with HDAC1, HDAC2, HDAC3, HDAC4, HDAC5, NCOR1, NCOR2, SIN3A, SIN3B, RBBP4, RBBP7, MTA1L1, SAP30 and MBD3. Interacts with KAT5 and EDNRA. Interacts with the 14-3-3 protein YWHAE, MEF2A, MEF2B and MEF2C. Interacts with ZMYND15. Interacts with KDM5B. Interacts with PML. Interacts with FOXP3. Interacts with RARA. Post-translationally, may be phosphorylated by CaMK1. Phosphorylated by the PKC kinases PKN1 and PKN2, impairing nuclear import. Phosphorylation at Ser-155 by MARK2, MARK3 and PRKD1 promotes interaction with 14-3-3 proteins and export from the nucleus. Phosphorylation at Ser-155 is a prerequisite for phosphorylation at Ser-181.

It localises to the nucleus. The protein localises to the cytoplasm. It carries out the reaction N(6)-acetyl-L-lysyl-[histone] + H2O = L-lysyl-[histone] + acetate. The catalysed reaction is N(6)-acetyl-L-lysyl-[protein] + H2O = L-lysyl-[protein] + acetate. Its function is as follows. Responsible for the deacetylation of lysine residues on the N-terminal part of the core histones (H2A, H2B, H3 and H4). Histone deacetylation gives a tag for epigenetic repression and plays an important role in transcriptional regulation, cell cycle progression and developmental events. Histone deacetylases act via the formation of large multiprotein complexes. Involved in muscle maturation by repressing transcription of myocyte enhancer factors such as MEF2A, MEF2B and MEF2C. During muscle differentiation, it shuttles into the cytoplasm, allowing the expression of myocyte enhancer factors. May be involved in Epstein-Barr virus (EBV) latency, possibly by repressing the viral BZLF1 gene. Positively regulates the transcriptional repressor activity of FOXP3. Serves as a corepressor of RARA, causing its deacetylation and inhibition of RARE DNA element binding. In association with RARA, plays a role in the repression of microRNA-10a and thereby in the inflammatory response. Also acetylates non-histone proteins, such as ALKBH5. The chain is Histone deacetylase 7 (HDAC7) from Homo sapiens (Human).